The sequence spans 457 residues: tRNA modification GTPase MnmE (457 aa).

Residues Arg22, Glu85, and Arg124 each contribute to the (6S)-5-formyl-5,6,7,8-tetrahydrofolate site. The region spanning 219–378 (GATVVIAGKP…LKEKIYDLVL (160 aa)) is the TrmE-type G domain. Asn229 provides a ligand contact to K(+). Residues 229 to 234 (NTGKSS), 248 to 254 (TPVPGTT), 273 to 276 (DTAG), and 333 to 336 (NKAD) contribute to the GTP site. Ser233 serves as a coordination point for Mg(2+). K(+) is bound by residues Thr248, Val250, and Thr253. Thr254 is a Mg(2+) binding site. Lys457 is a binding site for (6S)-5-formyl-5,6,7,8-tetrahydrofolate.

The protein belongs to the TRAFAC class TrmE-Era-EngA-EngB-Septin-like GTPase superfamily. TrmE GTPase family. In terms of assembly, homodimer. Heterotetramer of two MnmE and two MnmG subunits. The cofactor is K(+).

It is found in the cytoplasm. Its function is as follows. Exhibits a very high intrinsic GTPase hydrolysis rate. Involved in the addition of a carboxymethylaminomethyl (cmnm) group at the wobble position (U34) of certain tRNAs, forming tRNA-cmnm(5)s(2)U34. The polypeptide is tRNA modification GTPase MnmE (Syntrophus aciditrophicus (strain SB)).